Here is a 170-residue protein sequence, read N- to C-terminus: Plastocyanin, chloroplastic (170 aa).

The transit peptide at 1-71 (MATVTSAAVA…SAMLASNAMA (71 aa)) directs the protein to the chloroplast. The Plastocyanin-like domain occupies 72–170 (LEVLLGGDDG…AGMVGKVTVN (99 aa)). Cu cation is bound by residues H108, C155, H158, and M163.

Belongs to the plastocyanin family. Cu(2+) is required as a cofactor.

The protein localises to the plastid. The protein resides in the chloroplast thylakoid membrane. Participates in electron transfer between P700 and the cytochrome b6-f complex in photosystem I. The protein is Plastocyanin, chloroplastic (PETE) of Solanum lycopersicum (Tomato).